The chain runs to 48 residues: MPQLVPFYFLNQLTYGFLLLIILLVLFSQFLLPRILRLYISRLFISKL.

The chain crosses the membrane as a helical span at residues 13–33 (LTYGFLLLIILLVLFSQFLLP).

Belongs to the ATPase protein 8 family. In terms of assembly, F-type ATPases have 2 components, CF(1) - the catalytic core - and CF(0) - the membrane proton channel.

The protein localises to the mitochondrion membrane. Mitochondrial membrane ATP synthase (F(1)F(0) ATP synthase or Complex V) produces ATP from ADP in the presence of a proton gradient across the membrane which is generated by electron transport complexes of the respiratory chain. F-type ATPases consist of two structural domains, F(1) - containing the extramembraneous catalytic core and F(0) - containing the membrane proton channel, linked together by a central stalk and a peripheral stalk. During catalysis, ATP synthesis in the catalytic domain of F(1) is coupled via a rotary mechanism of the central stalk subunits to proton translocation. Part of the complex F(0) domain. Minor subunit located with subunit a in the membrane. The chain is ATP synthase protein 8 (ATP8) from Wickerhamomyces canadensis (Yeast).